Consider the following 166-residue polypeptide: MANVRPSVVFKQQEVNHMADILKNSKSFIVFEYHGLTAANILALRNVLHSSNSKLYVLKNNITARAFEKAGVSGFENQLTGPNAVAVAMDDEIAAIKAVNDVAKEFDFVKIKGAYLENKFADTHKIDQLAAIPGREGLYSMLLSCFTAPLRNVMYGLKAVAEQKGE.

The protein belongs to the universal ribosomal protein uL10 family. As to quaternary structure, part of the ribosomal stalk of the 50S ribosomal subunit. The N-terminus interacts with L11 and the large rRNA to form the base of the stalk. The C-terminus forms an elongated spine to which L12 dimers bind in a sequential fashion forming a multimeric L10(L12)X complex.

Its function is as follows. Forms part of the ribosomal stalk, playing a central role in the interaction of the ribosome with GTP-bound translation factors. This is Large ribosomal subunit protein uL10 from Ureaplasma parvum serovar 3 (strain ATCC 27815 / 27 / NCTC 11736).